A 333-amino-acid polypeptide reads, in one-letter code: Large ribosomal subunit protein mL39 (333 aa).

Residues 56–122 enclose the TGS domain; sequence DKIEVRYLGL…QESCTLQLLN (67 aa). The disordered stretch occupies residues 311–333; that stretch reads SKKPSPARLPNEPFEEQQQLQLS.

It belongs to the mitochondrion-specific ribosomal protein mL39 family. In terms of assembly, component of the mitochondrial ribosome large subunit (39S) which comprises a 16S rRNA and about 50 distinct proteins.

It localises to the mitochondrion. This is Large ribosomal subunit protein mL39 (mRpL39) from Drosophila melanogaster (Fruit fly).